We begin with the raw amino-acid sequence, 262 residues long: Protein NEGATIVE GRAVITROPIC RESPONSE OF ROOTS (262 aa).

The tract at residues 1–40 is disordered; it reads MKFFNWMQNKLGGKQENRKSNTSTSTTYAKPEPREEFSDW. The IGT motif signature appears at 43–49; sequence SLLAIGT.

Belongs to the LAZY family.

In terms of biological role, involved in the control of root gravitropism. The chain is Protein NEGATIVE GRAVITROPIC RESPONSE OF ROOTS from Medicago truncatula (Barrel medic).